Consider the following 393-residue polypeptide: Cytochrome b (393 aa).

4 helical membrane passes run 38–58 (FGSL…FLAM), 82–104 (WLLR…LHIF), 119–139 (VWCL…IGYV), and 185–205 (FFSL…LHLA). 2 residues coordinate heme b: His-88 and His-102. 2 residues coordinate heme b: His-189 and His-203. His-208 serves as a coordination point for a ubiquinone. Transmembrane regions (helical) follow at residues 231–251 (FYVK…IWIF), 295–315 (VGGV…PFFK), 327–347 (IYQG…WIGC), and 354–373 (FVTI…AITP).

This sequence belongs to the cytochrome b family. In terms of assembly, the main subunits of complex b-c1 are: cytochrome b, cytochrome c1 and the Rieske protein. It depends on heme b as a cofactor. In terms of processing, first mitochondrial-encoded protein to be shown to have its N-terminal methionine cleaved off.

The protein resides in the mitochondrion inner membrane. Functionally, component of the ubiquinol-cytochrome c reductase complex (complex III or cytochrome b-c1 complex) that is part of the mitochondrial respiratory chain. The b-c1 complex mediates electron transfer from ubiquinol to cytochrome c. Contributes to the generation of a proton gradient across the mitochondrial membrane that is then used for ATP synthesis. This is Cytochrome b (MT-CYB) from Solanum tuberosum (Potato).